The following is a 202-amino-acid chain: QQFSPRYIELVVVADHGMFKKYNSNLNTIRKWVHEMLNTVNGFFRSMNVDASLVNLEVWSKKDLIKVEKDSSKTLTSFGEWRERDLLPRISHDHAQLLTVIFLDEETIGIAYTAGMCDLSQSVAVVMDHSKKNLRVAVTMAHELGHNLGMRHDGNQCHCNAPSCIMADTLSKGLSFEFSDCSQNQYQTYLTKHNPQCILNKP.

Gln1 bears the Pyrrolidone carboxylic acid mark. Residues 6 to 202 enclose the Peptidase M12B domain; the sequence is RYIELVVVAD…HNPQCILNKP (197 aa). The Ca(2+) site is built by Glu9 and Asp93. 3 disulfide bridges follow: Cys117/Cys197, Cys157/Cys181, and Cys159/Cys164. His142 is a Zn(2+) binding site. Glu143 is an active-site residue. Positions 146 and 152 each coordinate Zn(2+). The Ca(2+) site is built by Cys197 and Asn200.

It belongs to the venom metalloproteinase (M12B) family. P-I subfamily. Monomer. It depends on Zn(2+) as a cofactor. In terms of tissue distribution, expressed by the venom gland.

The protein localises to the secreted. Its activity is regulated as follows. Inhibited by EDTA and 2-mercaptoethanol. Inhibited by 1 mM zinc ion and to a lesser extent by 1 mM calcium ion. Non-hemorrhagic metalloproteinase that hydrolyzes the alpha chains of fibrinogen, as well as fibrin, fibronectin and casein. Beta and gamma chains are also hydrolyzed, but more slowly. Thrombolytic activity is also observed. Induces detachment of endothelial cells followed by death, and inhibits endothelial cell adhesion to fibronectin. Induces edema in mouse paw. Inhibits ADP-induced platelet aggregation on human platelet-rich plasma with an IC(50) of 2.8 uM. This chain is Snake venom metalloproteinase leucurolysin-A, found in Bothrops leucurus (Whitetail lancehead).